Reading from the N-terminus, the 127-residue chain is Glycine cleavage system H protein 2 (127 aa).

The Lipoyl-binding domain maps to 24 to 105 (SVTVGISDHA…PYGSWIFKLK (82 aa)). N6-lipoyllysine is present on Lys-65.

The protein belongs to the GcvH family. As to quaternary structure, the glycine cleavage system is composed of four proteins: P, T, L and H. (R)-lipoate is required as a cofactor.

Functionally, the glycine cleavage system catalyzes the degradation of glycine. The H protein shuttles the methylamine group of glycine from the P protein to the T protein. The sequence is that of Glycine cleavage system H protein 2 from Pseudomonas putida (strain ATCC 47054 / DSM 6125 / CFBP 8728 / NCIMB 11950 / KT2440).